The following is a 349-amino-acid chain: ATP synthase subunit a-2 (349 aa).

Positions 1 to 97 are excised as a propeptide; that stretch reads MERLTRLNHF…SNYMKLMEIP (97 aa). Helical transmembrane passes span 118 to 138, 184 to 204, 213 to 233, 240 to 260, 280 to 300, 303 to 323, and 326 to 346; these read FSFT…LLLI, FFPC…QGMI, HFLI…IVGF, FFSF…LVLL, MMAG…MLCM, IFYF…TGLE, and VAIL…NDAI.

This sequence belongs to the ATPase A chain family. In terms of assembly, F-type ATPases have 2 components, CF(1) - the catalytic core - and CF(0) - the membrane proton channel. CF(1) has five subunits: alpha(3), beta(3), gamma(1), delta(1), epsilon(1). CF(0) has three main subunits: a, b and c.

It is found in the mitochondrion inner membrane. Its function is as follows. Mitochondrial membrane ATP synthase (F(1)F(0) ATP synthase or Complex V) produces ATP from ADP in the presence of a proton gradient across the membrane which is generated by electron transport complexes of the respiratory chain. F-type ATPases consist of two structural domains, F(1) - containing the extramembraneous catalytic core and F(0) - containing the membrane proton channel, linked together by a central stalk and a peripheral stalk. During catalysis, ATP synthesis in the catalytic domain of F(1) is coupled via a rotary mechanism of the central stalk subunits to proton translocation. Key component of the proton channel; it may play a direct role in the translocation of protons across the membrane. The sequence is that of ATP synthase subunit a-2 (ATP6-2) from Arabidopsis thaliana (Mouse-ear cress).